A 132-amino-acid polypeptide reads, in one-letter code: Small ribosomal subunit protein uS11 (132 aa).

Belongs to the universal ribosomal protein uS11 family. As to quaternary structure, part of the 30S ribosomal subunit. Interacts with proteins S7 and S18. Binds to IF-3.

In terms of biological role, located on the platform of the 30S subunit, it bridges several disparate RNA helices of the 16S rRNA. Forms part of the Shine-Dalgarno cleft in the 70S ribosome. The sequence is that of Small ribosomal subunit protein uS11 from Chlamydia trachomatis serovar L2 (strain ATCC VR-902B / DSM 19102 / 434/Bu).